A 197-amino-acid chain; its full sequence is Proteasome subunit beta 1 (197 aa).

Positions 1 to 6 are cleaved as a propeptide — removed in mature form; by autocatalysis; it reads MNRKTG. Catalysis depends on T7, which acts as the Nucleophile.

Belongs to the peptidase T1B family. As to quaternary structure, the 20S proteasome core is composed of 14 alpha and 14 beta subunits that assemble into four stacked heptameric rings, resulting in a barrel-shaped structure. The two inner rings, each composed of seven catalytic beta subunits, are sandwiched by two outer rings, each composed of seven alpha subunits. The catalytic chamber with the active sites is on the inside of the barrel. Has a gated structure, the ends of the cylinder being occluded by the N-termini of the alpha-subunits. Is capped at one or both ends by the proteasome regulatory ATPase, PAN.

The protein localises to the cytoplasm. It carries out the reaction Cleavage of peptide bonds with very broad specificity.. With respect to regulation, the formation of the proteasomal ATPase PAN-20S proteasome complex, via the docking of the C-termini of PAN into the intersubunit pockets in the alpha-rings, triggers opening of the gate for substrate entry. Interconversion between the open-gate and close-gate conformations leads to a dynamic regulation of the 20S proteasome proteolysis activity. Functionally, component of the proteasome core, a large protease complex with broad specificity involved in protein degradation. The chain is Proteasome subunit beta 1 from Pyrococcus abyssi (strain GE5 / Orsay).